Reading from the N-terminus, the 353-residue chain is Probable G-protein coupled receptor 139 (353 aa).

Residues 1 to 29 (MEHTHAHLAANSSLSWWSPGSACGLGFVP) are Extracellular-facing. Asn-11 is a glycosylation site (N-linked (GlcNAc...) asparagine). A helical membrane pass occupies residues 30–50 (VVYYSLLLCLGLPANILTVII). At 51 to 65 (LSQLVARRQKSSYNY) the chain is on the cytoplasmic side. A helical membrane pass occupies residues 66-86 (LLALAAADILVLFFIVFVDFL). Residues 87–102 (LEDFILNMQMPQVPDK) lie on the Extracellular side of the membrane. A helical membrane pass occupies residues 103–123 (IIEVLEFSSIHTSIWITVPLT). At 124–148 (IDRYIAVCHPLKYHTVSYPARTRKV) the chain is on the cytoplasmic side. A helical membrane pass occupies residues 149–169 (IVSVYITCFLTSIPYYWWPNI). Over 170–181 (WTEDYISTSVHH) the chain is Extracellular. A helical membrane pass occupies residues 182 to 202 (VLIWIHCFTVYLVPCSIFFIL). The Cytoplasmic segment spans residues 203–228 (NSIIVYKLRRKSNFRLRGYSTGKTTA). Residues 229 to 249 (ILFTITSIFATLWAPRIIMIL) traverse the membrane as a helical segment. Residues 250–268 (YHLYGAPIQNRWLVHIMSD) lie on the Extracellular side of the membrane. The helical transmembrane segment at 269–289 (IANMLALLNTAINFFLYCFIS) threads the bilayer. Residues 290–353 (KRFRTMAAAT…KNGKPIKVSP (64 aa)) lie on the Cytoplasmic side of the membrane.

Belongs to the G-protein coupled receptor 1 family. Expressed almost exclusively in the brain. Detected at very low levels in the peripheral tissues.

The protein resides in the cell membrane. Functionally, orphan receptor. Seems to act through a G(q/11)-mediated pathway. This is Probable G-protein coupled receptor 139 (GPR139) from Homo sapiens (Human).